The chain runs to 910 residues: von Willebrand factor A domain-containing protein DDB_G0292740 (910 aa).

The 132-residue stretch at 63 to 194 (AYQYYNVSSF…SITIHITMIS (132 aa)) folds into the VIT domain. The disordered stretch occupies residues 297-318 (IKNNPHSDSDSDSDDEENKKEN). Positions 346–515 (EFIFLIDCSG…DMETEVMKLL (170 aa)) constitute a VWFA domain. Residues 703 to 719 (QYQQQQQQQQQNFNSGF) are compositionally biased toward low complexity. Residues 703–815 (QYQQQQQQQQ…TQSESTPSND (113 aa)) form a disordered region. The segment covering 720 to 749 (APPPPPMMSSGPPPPPGSSFGAPPPPPPGG) has biased composition (pro residues). Residues 750–802 (AFPTSSISEKKSSSQSSSSYLPPTMSLSRKSSLSPSSPSKNYPSPKLSSPSLS) show a composition bias toward low complexity. Residues 803–815 (YGSTQSESTPSND) show a composition bias toward polar residues.

The sequence is that of von Willebrand factor A domain-containing protein DDB_G0292740 from Dictyostelium discoideum (Social amoeba).